The sequence spans 148 residues: Gag-Pol polyprotein (148 aa).

The Integrase catalytic domain maps to 1–64 (IPYNPQSQGV…SAGERIIDII (64 aa)). Residue E12 participates in Mg(2+) binding. The integrase-type DNA-binding region spans 83–130 (FRVYYRDSRDPIWKGPAKLLWKGEGAVVIQDNSDIKVVPRRKVKIIRD).

In terms of assembly, homotetramer; may further associate as a homohexadecamer. Part of the pre-integration complex (PIC) which is composed of viral genome, matrix protein, Vpr and integrase. Interacts with human SMARCB1/INI1 and human PSIP1/LEDGF isoform 1. Interacts with human KPNA3; this interaction might play a role in nuclear import of the pre-integration complex. Interacts with human NUP153; this interaction might play a role in nuclear import of the pre-integration complex. Specific enzymatic cleavages by the viral protease yield mature proteins.

Catalyzes viral DNA integration into the host chromosome, by performing a series of DNA cutting and joining reactions. This enzyme activity takes place after virion entry into a cell and reverse transcription of the RNA genome in dsDNA. The first step in the integration process is 3' processing. This step requires a complex comprising the viral genome, matrix protein, Vpr and integrase. This complex is called the pre-integration complex (PIC). The integrase protein removes 2 nucleotides from each 3' end of the viral DNA, leaving recessed CA OH's at the 3' ends. In the second step, the PIC enters cell nucleus. This process is mediated through integrase and Vpr proteins, and allows the virus to infect a non dividing cell. This ability to enter the nucleus is specific of lentiviruses, other retroviruses cannot and rely on cell division to access cell chromosomes. In the third step, termed strand transfer, the integrase protein joins the previously processed 3' ends to the 5' ends of strands of target cellular DNA at the site of integration. The 5'-ends are produced by integrase-catalyzed staggered cuts, 5 bp apart. A Y-shaped, gapped, recombination intermediate results, with the 5'-ends of the viral DNA strands and the 3' ends of target DNA strands remaining unjoined, flanking a gap of 5 bp. The last step is viral DNA integration into host chromosome. This involves host DNA repair synthesis in which the 5 bp gaps between the unjoined strands are filled in and then ligated. Since this process occurs at both cuts flanking the HIV genome, a 5 bp duplication of host DNA is produced at the ends of HIV-1 integration. Alternatively, Integrase may catalyze the excision of viral DNA just after strand transfer, this is termed disintegration. This is Gag-Pol polyprotein (gag-pol) from Homo sapiens (Human).